The chain runs to 116 residues: Large ribosomal subunit protein uL23 (116 aa).

This sequence belongs to the universal ribosomal protein uL23 family. In terms of assembly, part of the 50S ribosomal subunit. Contacts protein L29, and trigger factor when it is bound to the ribosome.

One of the early assembly proteins it binds 23S rRNA. One of the proteins that surrounds the polypeptide exit tunnel on the outside of the ribosome. Forms the main docking site for trigger factor binding to the ribosome. The polypeptide is Large ribosomal subunit protein uL23 (Psychrobacter arcticus (strain DSM 17307 / VKM B-2377 / 273-4)).